We begin with the raw amino-acid sequence, 196 residues long: Probable thymidylate kinase (196 aa).

7-14 lines the ATP pocket; the sequence is GIDGAGKT.

The protein belongs to the thymidylate kinase family.

It catalyses the reaction dTMP + ATP = dTDP + ADP. The protein is Probable thymidylate kinase (tmk) of Archaeoglobus fulgidus (strain ATCC 49558 / DSM 4304 / JCM 9628 / NBRC 100126 / VC-16).